The chain runs to 387 residues: ATP-dependent Clp protease proteolytic subunit-related protein 1, chloroplastic (387 aa).

Residues 1 to 41 (MATALVSPLTSQLNHEAVCSKFVLPKSPFMSGSKLFSSNMP) constitute a chloroplast transit peptide. The span at 355–365 (QDSSFEKRDYD) shows a compositional bias: basic and acidic residues. The segment at 355-387 (QDSSFEKRDYDGTLAQRAMRPGGGSPAAPAGLR) is disordered.

This sequence belongs to the peptidase S14 family. In terms of assembly, component of the chloroplastic Clp protease core complex which consist of at least 16 proteins: CLPP4 (3 copies), CLPP5 (3 copies), CLPR4 (2 copies), ClpP1 (1 copy), CLPP6 (1 copy), CLPR2 (1 copy), CLPT1 (1 copy), CLPT2 (1 copy) and 3 copies of CLPP3 and/or CLPR1 and/or CLPR3. The core complex is organized in two heptameric rings, one containing CLPP3,4,5,6 in a 1:2:3:1 ratio and the other CLPP1 and CLPR1,2,3,4 in a 3:1:1:1:1 ratio.

It is found in the plastid. It localises to the chloroplast stroma. Functionally, required for chloroplast development and differentiation. This is ATP-dependent Clp protease proteolytic subunit-related protein 1, chloroplastic from Arabidopsis thaliana (Mouse-ear cress).